A 568-amino-acid polypeptide reads, in one-letter code: Periplasmic pectate lyase (568 aa).

Residues 1 to 19 (MKRFALSLLAGLVALQASA) form the signal peptide.

Belongs to the polysaccharide lyase 2 family.

It localises to the periplasm. The catalysed reaction is Eliminative cleavage of (1-&gt;4)-alpha-D-galacturonan to give oligosaccharides with 4-deoxy-alpha-D-galact-4-enuronosyl groups at their non-reducing ends.. Its pathway is glycan metabolism; pectin degradation; 2-dehydro-3-deoxy-D-gluconate from pectin: step 2/5. This Pectobacterium carotovorum subsp. carotovorum (Erwinia carotovora subsp. carotovora) protein is Periplasmic pectate lyase (pelB).